We begin with the raw amino-acid sequence, 158 residues long: Snaclec jerdonuxin subunit alpha (158 aa).

The N-terminal stretch at 1–23 is a signal peptide; it reads MGRFTFVSFGLLVVFLSLSGTGA. Intrachain disulfides connect cysteine 27–cysteine 38, cysteine 55–cysteine 152, and cysteine 127–cysteine 144. The C-type lectin domain occupies 34–153; the sequence is YDRYCYQAFS…CGTENPFVCK (120 aa).

It belongs to the snaclec family. Tetramer of 4 heterodimers of alpha and beta subunits; disulfide-linked. As to expression, expressed by the venom gland.

It is found in the secreted. Snaclec that strongly induces platelet aggregation, in a dose-dependent manner. The protein is Snaclec jerdonuxin subunit alpha of Protobothrops jerdonii (Jerdon's pitviper).